The chain runs to 187 residues: 5-formyltetrahydrofolate cyclo-ligase (187 aa).

Residues 6–10 (RQQIR), 139–146 (GMGGGFYD), and aspartate 178 each bind ATP.

It belongs to the 5-formyltetrahydrofolate cyclo-ligase family.

The enzyme catalyses (6S)-5-formyl-5,6,7,8-tetrahydrofolate + ATP = (6R)-5,10-methenyltetrahydrofolate + ADP + phosphate. Its pathway is one-carbon metabolism; tetrahydrofolate interconversion. In terms of biological role, involved in the removal of 5-formyltetrahydrofolate. In vitro, it is a potent inhibitor of various folate-dependent enzymes in the C1 metabolism network and in vivo it might function as a folate storage. 5-formyltetrahydrofolate is also used as an antifolate rescue agent in cancer chemotherapy. Catalyzes the irreversible ATP-dependent transformation of 5-formyltetrahydrofolate (5-CHO-THF) to form 5,10-methenyltetrahydrofolate (5,10-CH=THF). The reverse reaction is catalyzed by the serine hydroxymethyltransferase GlyA (SHMT). In Haemophilus influenzae (strain ATCC 51907 / DSM 11121 / KW20 / Rd), this protein is 5-formyltetrahydrofolate cyclo-ligase.